Reading from the N-terminus, the 153-residue chain is MDGTGISDGSSVTGDAAAGFPAGATQAPGSKQGMDLYFDNALQYMGEHPVLAGVGGFLALYVGAGVYKGVQTRLNGGKAATQFLKGGFDPKMNAKEALQILNLKENNLTTKKLKEVHRKIMLANHPDKGGSPYLATKINEAKDFLEKKGIVRK.

Topologically, residues 1–43 (MDGTGISDGSSVTGDAAAGFPAGATQAPGSKQGMDLYFDNALQ) are mitochondrial intermembrane. Residues 44-66 (YMGEHPVLAGVGGFLALYVGAGV) traverse the membrane as a helical segment. Residues 67 to 153 (YKGVQTRLNG…FLEKKGIVRK (87 aa)) are Mitochondrial matrix-facing. The region spanning 96-153 (EALQILNLKENNLTTKKLKEVHRKIMLANHPDKGGSPYLATKINEAKDFLEKKGIVRK) is the J domain.

The protein belongs to the TIM14 family. Heterodimer with PAM16. Component of the PAM complex, at least composed of mtHsp70, MGE1, TIM44, PAM16, PAM17 and PAM18.

The protein localises to the mitochondrion inner membrane. In terms of biological role, essential component of the PAM complex, a complex required for the translocation of transit peptide-containing proteins from the inner membrane into the mitochondrial matrix in an ATP-dependent manner. In the complex, it is required to stimulate activity of mtHSP70 (SSC1). The sequence is that of Mitochondrial import inner membrane translocase subunit TIM14 (PAM18) from Candida glabrata (strain ATCC 2001 / BCRC 20586 / JCM 3761 / NBRC 0622 / NRRL Y-65 / CBS 138) (Yeast).